A 194-amino-acid chain; its full sequence is Large ribosomal subunit protein bL25B (194 aa).

The protein belongs to the bacterial ribosomal protein bL25 family. CTC subfamily. In terms of assembly, part of the 50S ribosomal subunit; part of the 5S rRNA/L5/L18/L25 subcomplex. Contacts the 5S rRNA. Binds to the 5S rRNA independently of L5 and L18.

Functionally, this is one of the proteins that binds to the 5S RNA in the ribosome where it forms part of the central protuberance. The polypeptide is Large ribosomal subunit protein bL25B (Symbiobacterium thermophilum (strain DSM 24528 / JCM 14929 / IAM 14863 / T)).